The chain runs to 473 residues: Cysteine--tRNA ligase (473 aa).

Cysteine 28 contributes to the Zn(2+) binding site. Positions 30–40 (PTVYNMPHIGN) match the 'HIGH' region motif. Zn(2+) is bound by residues cysteine 213, histidine 238, and glutamate 242. Positions 270 to 274 (KMSKS) match the 'KMSKS' region motif. Lysine 273 is a binding site for ATP.

Belongs to the class-I aminoacyl-tRNA synthetase family. It depends on Zn(2+) as a cofactor.

The protein resides in the cytoplasm. It catalyses the reaction tRNA(Cys) + L-cysteine + ATP = L-cysteinyl-tRNA(Cys) + AMP + diphosphate. This chain is Cysteine--tRNA ligase, found in Methanosarcina acetivorans (strain ATCC 35395 / DSM 2834 / JCM 12185 / C2A).